The chain runs to 532 residues: Muscarinic acetylcholine receptor M5 (532 aa).

The Extracellular segment spans residues 1–29 (MEGDSYHNATTVNGTPVYHQPLERHRLWE). A glycan (N-linked (GlcNAc...) asparagine) is linked at Asn8. A helical membrane pass occupies residues 30–53 (VISIAAVTAVVSLITIVGNVLVMI). Residues 54–66 (SFKVNSQLKTVNN) lie on the Cytoplasmic side of the membrane. Residues 67-87 (YYLLSLACADLIIGIFSMNLY) form a helical membrane-spanning segment. Topologically, residues 88-104 (TTYILMGRWALGSLACD) are extracellular. Cys103 and Cys183 are oxidised to a cystine. Residues 105–126 (LWLALDYVASNASVMNLLVISF) traverse the membrane as a helical segment. Residues 127–146 (DRYFSITRPLTYRAKRTPKR) lie on the Cytoplasmic side of the membrane. A helical transmembrane segment spans residues 147–169 (AGVMIGLAWLISFILWAPAILCW). At 170-191 (QYLVGKRTVPLDECQIQFLSEP) the chain is on the extracellular side. The chain crosses the membrane as a helical span at residues 192-214 (TITFGTAIAAFYIPVSVMTILYC). Over 215–443 (RIYRETEKRT…LVKERKAAQT (229 aa)) the chain is Cytoplasmic. The tract at residues 262 to 365 (AQRERNQTSW…SDTPNYFLSP (104 aa)) is disordered. Residues 269–281 (TSWSSSRRSASTS) are compositionally biased toward low complexity. Polar residues predominate over residues 282–308 (GKPSQATDPSTNQAKAEQLTTCSSYPS). The chain crosses the membrane as a helical span at residues 444–464 (LSAILLAFIITWTPYNIMVLV). Over 465 to 478 (STFCDKCVPVTLWH) the chain is Extracellular. The chain crosses the membrane as a helical span at residues 479–498 (LGYWLCYVNSTVNPICYALC). At 499–532 (NRTFRKTFKMLLLCRWKKKKVEEKLYWQGNSKLP) the chain is on the cytoplasmic side. Phosphothreonine is present on residues Thr501 and Thr505.

Belongs to the G-protein coupled receptor 1 family. Muscarinic acetylcholine receptor subfamily. CHRM5 sub-subfamily.

Its subcellular location is the cell membrane. The protein localises to the postsynaptic cell membrane. In terms of biological role, the muscarinic acetylcholine receptor mediates various cellular responses, including inhibition of adenylate cyclase, breakdown of phosphoinositides and modulation of potassium channels through the action of G proteins. Primary transducing effect is Pi turnover. This chain is Muscarinic acetylcholine receptor M5 (CHRM5), found in Macaca mulatta (Rhesus macaque).